The chain runs to 390 residues: GTPase Obg (390 aa).

The region spanning 1–159 (MKFVDEAAIL…RDILLELLLL (159 aa)) is the Obg domain. The OBG-type G domain maps to 160 to 333 (ADVGMLGLPN…LCWDVMKFIN (174 aa)). GTP is bound by residues 166–173 (GLPNAGKS), 191–195 (FTTLV), 213–216 (DIPG), 283–286 (NKID), and 314–316 (SAV). Residues serine 173 and threonine 193 each contribute to the Mg(2+) site. A compositionally biased stretch (acidic residues) spans 366–384 (AEADDDWDDDWDEEDDEGV). A disordered region spans residues 366–390 (AEADDDWDDDWDEEDDEGVEIIYQK).

It belongs to the TRAFAC class OBG-HflX-like GTPase superfamily. OBG GTPase family. In terms of assembly, monomer. Requires Mg(2+) as cofactor.

It localises to the cytoplasm. Its function is as follows. An essential GTPase which binds GTP, GDP and possibly (p)ppGpp with moderate affinity, with high nucleotide exchange rates and a fairly low GTP hydrolysis rate. Plays a role in control of the cell cycle, stress response, ribosome biogenesis and in those bacteria that undergo differentiation, in morphogenesis control. The sequence is that of GTPase Obg from Serratia proteamaculans (strain 568).